A 456-amino-acid chain; its full sequence is RUN domain-containing protein 3B (456 aa).

The tract at residues 1–24 is disordered; it reads MASRSLGGLSGIRGGGGGGGKKSL. The segment covering 8 to 21 has biased composition (gly residues); the sequence is GLSGIRGGGGGGGK. Residue R13 is modified to Omega-N-methylarginine. The 133-residue stretch at 57 to 189 folds into the RUN domain; sequence DDSSPEFNNF…IDFSFCLKGE (133 aa). Phosphoserine occurs at positions 215 and 216. The segment at 216–237 is disordered; it reads SDEEELRTLGSSGSESSTPENV. A compositionally biased stretch (polar residues) spans 224–235; sequence LGSSGSESSTPE. Residues 300–325 adopt a coiled-coil conformation; that stretch reads AHKLEKEQLEYIIVELQDQLTVLKNN. The segment covering 382–405 has biased composition (polar residues); sequence SLSQTSLDPGQSQEGDGKQDTLNV. The tract at residues 382 to 411 is disordered; the sequence is SLSQTSLDPGQSQEGDGKQDTLNVMSEGKE.

The protein belongs to the RUNDC3 family. Interacts with RAP2A.

The polypeptide is RUN domain-containing protein 3B (RUNDC3B) (Pongo abelii (Sumatran orangutan)).